The sequence spans 113 residues: Large ribosomal subunit protein bL19 (113 aa).

Belongs to the bacterial ribosomal protein bL19 family.

This protein is located at the 30S-50S ribosomal subunit interface and may play a role in the structure and function of the aminoacyl-tRNA binding site. In Corynebacterium kroppenstedtii (strain DSM 44385 / JCM 11950 / CIP 105744 / CCUG 35717), this protein is Large ribosomal subunit protein bL19.